The primary structure comprises 59 residues: uncharacterized protein (59 aa).

2 helical membrane passes run 1 to 21 (MNMYWFLGALLYFLIGTYIFI) and 30 to 50 (GSWILLALAAPLIIAGYPYFY).

It is found in the cell membrane. This is an uncharacterized protein from Bacillus subtilis (strain 168).